Reading from the N-terminus, the 299-residue chain is MAALRQIAFYGKGGIGKSTTSQNTLAALVELGQKILIVGCDPKADSTRLILNTKMQDTVLSLAAEAGSVEDLELEDVMKIGYKGIKCTEAGGPEPGVGCAGRGVITAINFLEENGAYEDVDYVSYDVLGDVVCGGFAMPIRENKAQEIYIVMSGEMMALYAANNIAKGILKYASSGGVRLGGLICNERQTDRELDLAEALAARLNSKLIHFVPRANIVQHAELRRQTVIEYAPDSQQAQEYRQLANKIHANSGNGTIPTPITMEELEGMLLDFGIMKTDEQALAELAEKEAAKAAAATA.

11–18 serves as a coordination point for ATP; that stretch reads GKGGIGKS. Cys-99 serves as a coordination point for [4Fe-4S] cluster. Arg-102 bears the ADP-ribosylarginine; by dinitrogenase reductase ADP-ribosyltransferase mark. Cys-133 is a binding site for [4Fe-4S] cluster.

It belongs to the NifH/BchL/ChlL family. In terms of assembly, homodimer. [4Fe-4S] cluster serves as cofactor. In terms of processing, the reversible ADP-ribosylation of Arg-102 inactivates the nitrogenase reductase and regulates nitrogenase activity.

It catalyses the reaction N2 + 8 reduced [2Fe-2S]-[ferredoxin] + 16 ATP + 16 H2O = H2 + 8 oxidized [2Fe-2S]-[ferredoxin] + 2 NH4(+) + 16 ADP + 16 phosphate + 6 H(+). Its function is as follows. The key enzymatic reactions in nitrogen fixation are catalyzed by the nitrogenase complex, which has 2 components: the iron protein and the molybdenum-iron protein. In Rhodopseudomonas palustris (strain BisB5), this protein is Nitrogenase iron protein.